The following is a 127-amino-acid chain: Putative truncated L-serine dehydratase YIL168W (127 aa).

N6-(pyridoxal phosphate)lysine is present on Lys-39.

Belongs to the serine/threonine dehydratase family. The cofactor is pyridoxal 5'-phosphate.

It localises to the cytoplasm. It catalyses the reaction L-serine = pyruvate + NH4(+). The protein operates within carbohydrate biosynthesis; gluconeogenesis. The polypeptide is Putative truncated L-serine dehydratase YIL168W (Saccharomyces cerevisiae (strain ATCC 204508 / S288c) (Baker's yeast)).